Here is a 235-residue protein sequence, read N- to C-terminus: Uridylate kinase (235 aa).

ATP is bound at residue 10–13 (KLSG). UMP is bound at residue Gly-52. Residues Gly-53 and Arg-57 each coordinate ATP. UMP is bound by residues Asp-72 and 133 to 140 (TSNPYFST). The ATP site is built by Thr-160, Tyr-166, and Asp-169.

It belongs to the UMP kinase family. In terms of assembly, homohexamer.

The protein localises to the cytoplasm. The enzyme catalyses UMP + ATP = UDP + ADP. It participates in pyrimidine metabolism; CTP biosynthesis via de novo pathway; UDP from UMP (UMPK route): step 1/1. With respect to regulation, inhibited by UTP. Catalyzes the reversible phosphorylation of UMP to UDP. This chain is Uridylate kinase, found in Solibacter usitatus (strain Ellin6076).